The sequence spans 347 residues: 4-hydroxy-2-oxovalerate aldolase 2 (347 aa).

In terms of domain architecture, Pyruvate carboxyltransferase spans 7 to 259 (VRITDTSLRD…KTGIDFFDIA (253 aa)). Substrate is bound at residue 15-16 (RD). D16 provides a ligand contact to Mn(2+). H19 acts as the Proton acceptor in catalysis. 2 residues coordinate substrate: S169 and H198. H198 and H200 together coordinate Mn(2+). Y289 is a substrate binding site.

Belongs to the 4-hydroxy-2-oxovalerate aldolase family.

The catalysed reaction is (S)-4-hydroxy-2-oxopentanoate = acetaldehyde + pyruvate. The polypeptide is 4-hydroxy-2-oxovalerate aldolase 2 (Mycobacterium ulcerans (strain Agy99)).